We begin with the raw amino-acid sequence, 302 residues long: MFMTPDQQDAKKGILLAISAYTMWGIAPIYFKALGAVSALEILSHRVVWSFVLLAVLIHLGRRWRSVVGVVHTPRKFWLLLVTALLVGGNWLIFIWSINANHMLDASLGYYINPLLNVLLGMLFLGERLRKLQWFAVALAAIGVGIQLVVFGSVPIVAIALATSFGFYGLLRKKIQVDAQTGLFLETLFMLPAAAIYLIWLADTPTSDMALNTWQLNLLLVCAGVVTTLPLLCFTGAAARLKLSTLGFFQYIGPSLMFLLAVLVYGEAFTSDKAITFAFIWSALVIFSVDGLKAGHAARRAR.

Transmembrane regions (helical) follow at residues 13-32 (GILL…IYFK), 42-64 (ILSH…GRRW), 77-96 (FWLL…IFIW), 106-125 (ASLG…MLFL), 132-150 (LQWF…QLVV), 154-171 (VPIV…YGLL), 183-202 (LFLE…IWLA), 217-239 (NLLL…GAAA), 246-265 (LGFF…VLVY), and 275-297 (ITFA…AGHA). Residues 22–149 (TMWGIAPIYF…AAIGVGIQLV (128 aa)) form the EamA domain.

The protein belongs to the EamA transporter family.

It localises to the cell membrane. This is an uncharacterized protein from Vibrio cholerae serotype O1 (strain ATCC 39315 / El Tor Inaba N16961).